A 523-amino-acid polypeptide reads, in one-letter code: UDP-glucuronosyltransferase 3A1 (523 aa).

Positions 1-23 (MAVGRKSLILSLLIQHFVLLHGA) are cleaved as a signal peptide. The Extracellular portion of the chain corresponds to 24–483 (KILTVCFLGG…YSYQQPLYQQ (460 aa)). An N-linked (GlcNAc...) asparagine glycan is attached at N125. The helical transmembrane segment at 484–504 (YLLDVFLFVCVCVIGACYLTV) threads the bilayer. Residues 505-523 (KLLKMFIQKLCSFRKLKQN) lie on the Cytoplasmic side of the membrane.

The protein belongs to the UDP-glycosyltransferase family.

The protein resides in the membrane. The enzyme catalyses glucuronate acceptor + UDP-alpha-D-glucuronate = acceptor beta-D-glucuronoside + UDP + H(+). Its function is as follows. UDP-glucuronosyltransferases catalyze phase II biotransformation reactions in which lipophilic substrates are conjugated with glucuronic acid to increase water solubility and enhance excretion. They are of major importance in the conjugation and subsequent elimination of potentially toxic xenobiotics and endogenous compounds. The polypeptide is UDP-glucuronosyltransferase 3A1 (ugt3a1) (Xenopus laevis (African clawed frog)).